The chain runs to 384 residues: 4-hydroxy-3-methylbut-2-en-1-yl diphosphate synthase (flavodoxin) 1 (384 aa).

[4Fe-4S] cluster-binding residues include cysteine 281, cysteine 284, cysteine 316, and glutamate 323.

This sequence belongs to the IspG family. [4Fe-4S] cluster is required as a cofactor.

It catalyses the reaction (2E)-4-hydroxy-3-methylbut-2-enyl diphosphate + oxidized [flavodoxin] + H2O + 2 H(+) = 2-C-methyl-D-erythritol 2,4-cyclic diphosphate + reduced [flavodoxin]. Its pathway is isoprenoid biosynthesis; isopentenyl diphosphate biosynthesis via DXP pathway; isopentenyl diphosphate from 1-deoxy-D-xylulose 5-phosphate: step 5/6. Converts 2C-methyl-D-erythritol 2,4-cyclodiphosphate (ME-2,4cPP) into 1-hydroxy-2-methyl-2-(E)-butenyl 4-diphosphate. This chain is 4-hydroxy-3-methylbut-2-en-1-yl diphosphate synthase (flavodoxin) 1, found in Streptomyces coelicolor (strain ATCC BAA-471 / A3(2) / M145).